Reading from the N-terminus, the 523-residue chain is Ubiquitin carboxyl-terminal hydrolase 22-A (523 aa).

The UBP-type zinc-finger motif lies at 4 to 121 (AGCSHVNSFK…KEEQRKAWKL (118 aa)). The Zn(2+) site is built by Cys6, His8, Cys46, Cys49, Cys59, Cys62, Cys67, His72, His76, His82, Cys95, and Cys98. One can recognise a USP domain in the interval 174-518 (RGLINLGNTC…EGYLLFYHKQ (345 aa)). Catalysis depends on Cys183, which acts as the Nucleophile. His477 acts as the Proton acceptor in catalysis.

This sequence belongs to the peptidase C19 family. UBP8 subfamily. In terms of assembly, component of some SAGA transcription coactivator-HAT complexes.

The protein resides in the nucleus. It catalyses the reaction Thiol-dependent hydrolysis of ester, thioester, amide, peptide and isopeptide bonds formed by the C-terminal Gly of ubiquitin (a 76-residue protein attached to proteins as an intracellular targeting signal).. Its function is as follows. Histone deubiquitinating component of the transcription regulatory histone acetylation (HAT) complex SAGA. Catalyzes the deubiquitination of both histones H2A and H2B, thereby acting as a coactivator. Recruited to specific gene promoters by activators, where it is required for transcription. The chain is Ubiquitin carboxyl-terminal hydrolase 22-A (usp22-a) from Xenopus laevis (African clawed frog).